The following is a 668-amino-acid chain: Tyrosine-protein phosphatase non-receptor type ptp-2 (668 aa).

SH2 domains lie at 10-113 and 134-232; these read NFYY…KKPV and WWHG…EEPL. Residues 264–580 form the Tyrosine-protein phosphatase domain; that stretch reads ISEEFDRLSQ…QFLYKALAFY (317 aa). Cys518 acts as the Phosphocysteine intermediate in catalysis. The segment at 603-668 is disordered; sequence PRRLRPTPNA…SSTLLKSTKK (66 aa). 2 stretches are compositionally biased toward low complexity: residues 616–634 and 652–668; these read SSAR…SSRT and STSS…STKK.

The protein belongs to the protein-tyrosine phosphatase family. Non-receptor class 2 subfamily. In terms of tissue distribution, expressed in embryonic cells, developing vulva, body wall muscles, head neurons and gonadal sheath cells.

It localises to the cytoplasm. It catalyses the reaction O-phospho-L-tyrosyl-[protein] + H2O = L-tyrosyl-[protein] + phosphate. Functionally, involved in embryonic and larval development. Plays a role in oogenesis by regulating mpk-1 phosphorylation and oocyte maturation in response to major sperm protein (MSP). During the formation of neuromuscular junctions at the larval stage, negatively regulates membrane protrusion from body wall muscles probably downstream of receptor egl-15. Plays a role in fluid homeostasis probably downstream of receptor egl-15 and adapter soc-1. Promotes vulva induction and negatively regulates fertility probably downstream of receptor let-23. Negatively regulates daf-2-mediated repression of dauer formation. In Caenorhabditis elegans, this protein is Tyrosine-protein phosphatase non-receptor type ptp-2.